The sequence spans 499 residues: Proline dehydrogenase 1, mitochondrial (499 aa).

The N-terminal 72 residues, 1 to 72, are a transit peptide targeting the mitochondrion; sequence MATRLLRTNF…LDLSDQARLF (72 aa).

The protein belongs to the proline oxidase family. It depends on FAD as a cofactor. Ubiquitous. Highest expression in pollen grains, in the stigma and in developing embryos.

The protein resides in the mitochondrion. It carries out the reaction L-proline + a quinone = (S)-1-pyrroline-5-carboxylate + a quinol + H(+). It functions in the pathway amino-acid degradation; L-proline degradation into L-glutamate; L-glutamate from L-proline: step 1/2. In terms of biological role, converts proline to delta-1-pyrroline-5-carboxylate. In Arabidopsis thaliana (Mouse-ear cress), this protein is Proline dehydrogenase 1, mitochondrial (POX1).